A 200-amino-acid polypeptide reads, in one-letter code: NAD(P)H dehydrogenase (quinone) (200 aa).

Positions 4–191 (VLVLYYSMYG…DIARFQGKHV (188 aa)) constitute a Flavodoxin-like domain. FMN-binding positions include 10-15 (SMYGHI) and 79-81 (TRF). Position 12 (Y12) interacts with NAD(+). Residue W99 participates in substrate binding. FMN-binding positions include 114 to 120 (STGTQHG) and H135.

The protein belongs to the WrbA family. FMN serves as cofactor.

It catalyses the reaction a quinone + NADH + H(+) = a quinol + NAD(+). The catalysed reaction is a quinone + NADPH + H(+) = a quinol + NADP(+). The polypeptide is NAD(P)H dehydrogenase (quinone) (Paraburkholderia phytofirmans (strain DSM 17436 / LMG 22146 / PsJN) (Burkholderia phytofirmans)).